The primary structure comprises 152 residues: Phosphopantetheine adenylyltransferase (152 aa).

Position 9 (serine 9) interacts with substrate. Residues 9–10 (SF) and histidine 17 contribute to the ATP site. Residues lysine 41, threonine 73, and arginine 87 each coordinate substrate. Residues 88–90 (GLR), glutamate 98, and 122–128 (TSFISSS) each bind ATP.

This sequence belongs to the bacterial CoaD family. As to quaternary structure, homohexamer. It depends on Mg(2+) as a cofactor.

It is found in the cytoplasm. The catalysed reaction is (R)-4'-phosphopantetheine + ATP + H(+) = 3'-dephospho-CoA + diphosphate. Its pathway is cofactor biosynthesis; coenzyme A biosynthesis; CoA from (R)-pantothenate: step 4/5. Reversibly transfers an adenylyl group from ATP to 4'-phosphopantetheine, yielding dephospho-CoA (dPCoA) and pyrophosphate. This Flavobacterium johnsoniae (strain ATCC 17061 / DSM 2064 / JCM 8514 / BCRC 14874 / CCUG 350202 / NBRC 14942 / NCIMB 11054 / UW101) (Cytophaga johnsonae) protein is Phosphopantetheine adenylyltransferase.